Here is a 418-residue protein sequence, read N- to C-terminus: Equilibrative nucleotide transporter 4 (418 aa).

11 helical membrane passes run 20–40 (MVVCCILGIGSLFSWNSMLTI), 54–74 (SRVFTLIYQPIALGTIMILAY), 85–105 (ILTGYILFTISTFLLIVLDLT), 108–128 (GHGGIGHYIVLCTIVASFGLA), 147–169 (LIQSYMAGSGMAGALTSVLRLIT), 186–206 (IFLAISTFIELLCVILYAYVF), 264–284 (HAVNLFLIYVLTLSIFPGFLY), 291–311 (GLGDWYALILVATYNFWDLFG), 326–346 (KALTIAVLTRYFLVPAFYFTA), 353–373 (WMIMLVSILGLTTGHLTVCIM), and 392–412 (LVVFILGGAVVGISLGWLWLI).

The protein belongs to the SLC29A/ENT transporter (TC 2.A.57) family. In terms of tissue distribution, expressed in leaves and at lowe levels in stems and flowers.

The protein localises to the cell membrane. Nucleoside transporter that can mediate uptake of adenosine, uridine, guanosine or cytidine when expressed in a heterologous system (yeast). This is Equilibrative nucleotide transporter 4 (ENT4) from Arabidopsis thaliana (Mouse-ear cress).